Here is a 526-residue protein sequence, read N- to C-terminus: MLMLLVRGTHYENLRSKVVLPTPLGGRSTETFVSEFPGPDTGIRWRRSDEALRVNVGGVRRQLSARALARFPGTRLGRLQAAASEEQARRLCDDYDEAAREFYFDRHPGFFLSLLHFYRTGHLHVLDELCVFAFGQEADYWGLGENALAACCRARYLERRLTQPHAWDEDSDTPSSVDPCPDEISDVQRELARYGAARCGRLRRRLWLTMENPGYSLPSKLFSCVSISVVLASIAAMCIHSLPEYQAREAAAAVAAVAAGRSPEGVRDDPVLRRLEYFCIAWFSFEVSSRLLLAPSTRNFFCHPLNLIDIVSVLPFYLTLLAGVALGDQGGKEFGHLGKVVQVFRLMRIFRVLKLARHSTGLRSLGATLKHSYREVGILLLYLAVGVSVFSGVAYTAEKEEDVGFNTIPACWWWGTVSMTTVGYGDVVPVTVAGKLAASGCILGGILVVALPITIIFNKFSHFYRRQKALEAAVRNSNHREFEDLLSSVDGVSEASLETSRETSQEGRSADLESQAPSEPPHPQMY.

At 1–217 (MLMLLVRGTH…LTMENPGYSL (217 aa)) the chain is on the cytoplasmic side. Residues 218-239 (PSKLFSCVSISVVLASIAAMCI) form a helical membrane-spanning segment. Over 240–270 (HSLPEYQAREAAAAVAAVAAGRSPEGVRDDP) the chain is Extracellular. Residues 271-293 (VLRRLEYFCIAWFSFEVSSRLLL) traverse the membrane as a helical segment. Over 294–304 (APSTRNFFCHP) the chain is Cytoplasmic. The chain crosses the membrane as a helical span at residues 305–322 (LNLIDIVSVLPFYLTLLA). At 323 to 337 (GVALGDQGGKEFGHL) the chain is on the extracellular side. The chain crosses the membrane as a helical; Voltage-sensor span at residues 338–358 (GKVVQVFRLMRIFRVLKLARH). The Cytoplasmic segment spans residues 359–373 (STGLRSLGATLKHSY). Residues 374–395 (REVGILLLYLAVGVSVFSGVAY) traverse the membrane as a helical segment. At 396–408 (TAEKEEDVGFNTI) the chain is on the extracellular side. The segment at residues 409-420 (PACWWWGTVSMT) is an intramembrane region (helical). The short motif at 421-426 (TVGYGD) is the Selectivity filter element. An intramembrane segment occupies 421–428 (TVGYGDVV). Over 429–435 (PVTVAGK) the chain is Extracellular. The helical transmembrane segment at 436 to 464 (LAASGCILGGILVVALPITIIFNKFSHFY) threads the bilayer. Residues 465 to 526 (RRQKALEAAV…PSEPPHPQMY (62 aa)) are Cytoplasmic-facing. The disordered stretch occupies residues 491–526 (GVSEASLETSRETSQEGRSADLESQAPSEPPHPQMY). Positions 499 to 511 (TSRETSQEGRSAD) are enriched in basic and acidic residues.

This sequence belongs to the potassium channel family. S (TC 1.A.1.2) subfamily. Kv9.1/KCNS1 sub-subfamily. In terms of assembly, heterotetramer with KCNB1. Heterotetramer with KCNB2. Does not form homomultimers.

It is found in the cell membrane. Potassium channel regulatory subunit that modulate the delayed rectifier voltage-gated potassium channel activity of KCNB1 and KCNB2 by altering their kinetics, expression levels, and shifting the half-inactivation potential to more polarized values. While it does not form functional channels on its own, it can form functional heterotetrameric channels with KCNB1 and KCNB2. Each regulatory subunit has unique regulatory properties that can lead to extensive inhibition, significant changes in kinetics, and/or substantial shifts in the voltage dependencies of the inactivation process. In Pan troglodytes (Chimpanzee), this protein is Delayed-rectifier potassium channel regulatory subunit KCNS1.